The following is a 186-amino-acid chain: UPF0301 protein CGSHiEE_01530 (186 aa).

Belongs to the UPF0301 (AlgH) family.

The sequence is that of UPF0301 protein CGSHiEE_01530 from Haemophilus influenzae (strain PittEE).